Here is a 968-residue protein sequence, read N- to C-terminus: RNA polymerase-associated protein RapA (968 aa).

The Helicase ATP-binding domain occupies 164-334 (DVGRRHAPRV…FARLRLLDPN (171 aa)). 177–184 (DEVGLGKT) contacts ATP. A DEAH box motif is present at residues 280 to 283 (DEAH). The Helicase C-terminal domain occupies 490–644 (RVEWLMGYLT…TCPTGRTIYD (155 aa)).

Belongs to the SNF2/RAD54 helicase family. RapA subfamily. As to quaternary structure, interacts with the RNAP. Has a higher affinity for the core RNAP than for the holoenzyme. Its ATPase activity is stimulated by binding to RNAP.

Its function is as follows. Transcription regulator that activates transcription by stimulating RNA polymerase (RNAP) recycling in case of stress conditions such as supercoiled DNA or high salt concentrations. Probably acts by releasing the RNAP, when it is trapped or immobilized on tightly supercoiled DNA. Does not activate transcription on linear DNA. Probably not involved in DNA repair. This chain is RNA polymerase-associated protein RapA, found in Enterobacter sp. (strain 638).